We begin with the raw amino-acid sequence, 508 residues long: Photosystem II CP47 reaction center protein (508 aa).

A run of 6 helical transmembrane segments spans residues 21–36 (AVHI…WAGS), 101–115 (IVFS…IWHW), 140–156 (GIHL…FGAF), 203–218 (IAAG…FHLS), 237–252 (VLSS…AFVV), and 457–472 (TFAL…HGAR).

It belongs to the PsbB/PsbC family. PsbB subfamily. As to quaternary structure, PSII is composed of 1 copy each of membrane proteins PsbA, PsbB, PsbC, PsbD, PsbE, PsbF, PsbH, PsbI, PsbJ, PsbK, PsbL, PsbM, PsbT, PsbX, PsbY, PsbZ, Psb30/Ycf12, at least 3 peripheral proteins of the oxygen-evolving complex and a large number of cofactors. It forms dimeric complexes. It depends on Binds multiple chlorophylls. PSII binds additional chlorophylls, carotenoids and specific lipids. as a cofactor.

Its subcellular location is the plastid. The protein resides in the chloroplast thylakoid membrane. Its function is as follows. One of the components of the core complex of photosystem II (PSII). It binds chlorophyll and helps catalyze the primary light-induced photochemical processes of PSII. PSII is a light-driven water:plastoquinone oxidoreductase, using light energy to abstract electrons from H(2)O, generating O(2) and a proton gradient subsequently used for ATP formation. The polypeptide is Photosystem II CP47 reaction center protein (Agrostis stolonifera (Creeping bentgrass)).